The chain runs to 397 residues: Elongation factor Tu-1 (397 aa).

The region spanning K10 to E206 is the tr-type G domain. The interval G19–T26 is G1. Residue G19–T26 participates in GTP binding. Position 26 (T26) interacts with Mg(2+). The interval G62 to S66 is G2. A G3 region spans residues D83 to G86. GTP is bound by residues D83 to H87 and N138 to D141. A G4 region spans residues N138–D141. A G5 region spans residues S176–L178.

Belongs to the TRAFAC class translation factor GTPase superfamily. Classic translation factor GTPase family. EF-Tu/EF-1A subfamily. Monomer.

The protein localises to the cytoplasm. It carries out the reaction GTP + H2O = GDP + phosphate + H(+). Its function is as follows. GTP hydrolase that promotes the GTP-dependent binding of aminoacyl-tRNA to the A-site of ribosomes during protein biosynthesis. This chain is Elongation factor Tu-1, found in Streptomyces coelicolor (strain ATCC BAA-471 / A3(2) / M145).